The chain runs to 190 residues: Potassium-transporting ATPase KdpC subunit (190 aa).

The helical transmembrane segment at 10–30 (TFLFLLLITGGVYPLLTTALG) threads the bilayer.

Belongs to the KdpC family. As to quaternary structure, the system is composed of three essential subunits: KdpA, KdpB and KdpC.

The protein localises to the cell inner membrane. Its function is as follows. Part of the high-affinity ATP-driven potassium transport (or Kdp) system, which catalyzes the hydrolysis of ATP coupled with the electrogenic transport of potassium into the cytoplasm. This subunit acts as a catalytic chaperone that increases the ATP-binding affinity of the ATP-hydrolyzing subunit KdpB by the formation of a transient KdpB/KdpC/ATP ternary complex. This chain is Potassium-transporting ATPase KdpC subunit, found in Escherichia coli O6:H1 (strain CFT073 / ATCC 700928 / UPEC).